A 78-amino-acid chain; its full sequence is UPF0349 protein RBAM_029300 (78 aa).

The protein belongs to the UPF0349 family.

This is UPF0349 protein RBAM_029300 from Bacillus velezensis (strain DSM 23117 / BGSC 10A6 / LMG 26770 / FZB42) (Bacillus amyloliquefaciens subsp. plantarum).